A 387-amino-acid chain; its full sequence is Exodeoxyribonuclease 7 large subunit (387 aa).

Belongs to the XseA family. As to quaternary structure, heterooligomer composed of large and small subunits.

Its subcellular location is the cytoplasm. The enzyme catalyses Exonucleolytic cleavage in either 5'- to 3'- or 3'- to 5'-direction to yield nucleoside 5'-phosphates.. Its function is as follows. Bidirectionally degrades single-stranded DNA into large acid-insoluble oligonucleotides, which are then degraded further into small acid-soluble oligonucleotides. The polypeptide is Exodeoxyribonuclease 7 large subunit (Campylobacter hominis (strain ATCC BAA-381 / DSM 21671 / CCUG 45161 / LMG 19568 / NCTC 13146 / CH001A)).